The chain runs to 87 residues: Large ribosomal subunit protein bL27 (87 aa).

This sequence belongs to the bacterial ribosomal protein bL27 family.

In Stenotrophomonas maltophilia (strain K279a), this protein is Large ribosomal subunit protein bL27.